A 364-amino-acid chain; its full sequence is Probable dual-specificity RNA methyltransferase RlmN (364 aa).

The Proton acceptor role is filled by E107. One can recognise a Radical SAM core domain in the interval 113-346 (HEYGNSVCVT…ATIRREQGSD (234 aa)). An intrachain disulfide couples C120 to C351. C127, C131, and C134 together coordinate [4Fe-4S] cluster. Residues 177–178 (GE), S209, 232–234 (SLH), and N308 contribute to the S-adenosyl-L-methionine site. The active-site S-methylcysteine intermediate is the C351.

This sequence belongs to the radical SAM superfamily. RlmN family. Requires [4Fe-4S] cluster as cofactor.

It is found in the cytoplasm. It catalyses the reaction adenosine(2503) in 23S rRNA + 2 reduced [2Fe-2S]-[ferredoxin] + 2 S-adenosyl-L-methionine = 2-methyladenosine(2503) in 23S rRNA + 5'-deoxyadenosine + L-methionine + 2 oxidized [2Fe-2S]-[ferredoxin] + S-adenosyl-L-homocysteine. The catalysed reaction is adenosine(37) in tRNA + 2 reduced [2Fe-2S]-[ferredoxin] + 2 S-adenosyl-L-methionine = 2-methyladenosine(37) in tRNA + 5'-deoxyadenosine + L-methionine + 2 oxidized [2Fe-2S]-[ferredoxin] + S-adenosyl-L-homocysteine. In terms of biological role, specifically methylates position 2 of adenine 2503 in 23S rRNA and position 2 of adenine 37 in tRNAs. Confers resistance to some classes of antibiotics. The chain is Probable dual-specificity RNA methyltransferase RlmN from Staphylococcus carnosus (strain TM300).